A 316-amino-acid polypeptide reads, in one-letter code: Ribosomal RNA small subunit methyltransferase H (316 aa).

Residues 35–37 (AGH), aspartate 55, phenylalanine 84, aspartate 105, and glutamine 112 each bind S-adenosyl-L-methionine.

Belongs to the methyltransferase superfamily. RsmH family.

Its subcellular location is the cytoplasm. The enzyme catalyses cytidine(1402) in 16S rRNA + S-adenosyl-L-methionine = N(4)-methylcytidine(1402) in 16S rRNA + S-adenosyl-L-homocysteine + H(+). Its function is as follows. Specifically methylates the N4 position of cytidine in position 1402 (C1402) of 16S rRNA. This Streptococcus pneumoniae serotype 4 (strain ATCC BAA-334 / TIGR4) protein is Ribosomal RNA small subunit methyltransferase H.